A 130-amino-acid chain; its full sequence is Small ribosomal subunit protein uS9 (130 aa).

This sequence belongs to the universal ribosomal protein uS9 family.

In Caldicellulosiruptor saccharolyticus (strain ATCC 43494 / DSM 8903 / Tp8T 6331), this protein is Small ribosomal subunit protein uS9.